The following is a 172-amino-acid chain: uncharacterized protein (172 aa).

3 helical membrane passes run Ile-7–Ile-27, Leu-59–Phe-79, and Phe-89–Lys-109.

The protein to M.jannaschii MJ0695.

It is found in the cell membrane. This is an uncharacterized protein from Methanocaldococcus jannaschii (strain ATCC 43067 / DSM 2661 / JAL-1 / JCM 10045 / NBRC 100440) (Methanococcus jannaschii).